The sequence spans 819 residues: Kinesin-like protein KIN-13A (819 aa).

A disordered region spans residues 150 to 178 (EPFEPSPFIPKEMDEDDDDMLPGSQPGPS). The Kinesin motor domain maps to 199–535 (KIKVVVRKRP…LRYADRVKSL (337 aa)). 289 to 296 (GQTGSGKT) contacts ATP. Residues 534-729 (SLSKGSNTRK…QSEKESSCDD (196 aa)) are disordered. Over residues 550 to 562 (TIPSSKDSSSAPS) the composition is skewed to low complexity. Basic and acidic residues-rich tracts occupy residues 577–589 (QEKRPVETSRKAA) and 614–631 (RGKEENGSSGLNDRERVD). The span at 632–652 (LNSSRISYNSKPQSVQSSANL) shows a compositional bias: polar residues. A compositionally biased stretch (basic and acidic residues) spans 669 to 686 (YRDDKPERQSNYAKKDSG). Residues 697-719 (QQAKQLQQQQRPTSASASQNSSR) are compositionally biased toward low complexity. Residues 736–767 (LEEEEALIAAHRKEIENTMEIVREEMNLLAEV) adopt a coiled-coil conformation.

The protein belongs to the TRAFAC class myosin-kinesin ATPase superfamily. Kinesin family. KIN-13 subfamily. Ubiquitous.

It localises to the microsome. The polypeptide is Kinesin-like protein KIN-13A (Oryza sativa subsp. japonica (Rice)).